Reading from the N-terminus, the 158-residue chain is Flagellar assembly factor FliW (158 aa).

This sequence belongs to the FliW family. Interacts with translational regulator CsrA and flagellin(s).

It localises to the cytoplasm. Acts as an anti-CsrA protein, binds CsrA and prevents it from repressing translation of its target genes, one of which is flagellin. Binds to flagellin and participates in the assembly of the flagellum. The sequence is that of Flagellar assembly factor FliW from Syntrophus aciditrophicus (strain SB).